Here is a 439-residue protein sequence, read N- to C-terminus: Tubulin beta chain (439 aa).

Gln-11, Glu-69, Ser-138, Gly-142, Thr-143, Gly-144, Asn-204, and Asn-226 together coordinate GTP. Glu-69 contributes to the Mg(2+) binding site.

Belongs to the tubulin family. In terms of assembly, dimer of alpha and beta chains. A typical microtubule is a hollow water-filled tube with an outer diameter of 25 nm and an inner diameter of 15 nM. Alpha-beta heterodimers associate head-to-tail to form protofilaments running lengthwise along the microtubule wall with the beta-tubulin subunit facing the microtubule plus end conferring a structural polarity. Microtubules usually have 13 protofilaments but different protofilament numbers can be found in some organisms and specialized cells. Mg(2+) serves as cofactor.

It localises to the cytoplasm. Its subcellular location is the cytoskeleton. In terms of biological role, tubulin is the major constituent of microtubules, a cylinder consisting of laterally associated linear protofilaments composed of alpha- and beta-tubulin heterodimers. Microtubules grow by the addition of GTP-tubulin dimers to the microtubule end, where a stabilizing cap forms. Below the cap, tubulin dimers are in GDP-bound state, owing to GTPase activity of alpha-tubulin. The chain is Tubulin beta chain (TUB2) from Encephalitozoon intestinalis (Microsporidian parasite).